The sequence spans 131 residues: Phosphoribosyl-AMP cyclohydrolase (131 aa).

D76 serves as a coordination point for Mg(2+). Residue C77 coordinates Zn(2+). D78 and D80 together coordinate Mg(2+). The Zn(2+) site is built by C94 and C101.

The protein belongs to the PRA-CH family. As to quaternary structure, homodimer. Mg(2+) serves as cofactor. Zn(2+) is required as a cofactor.

It localises to the cytoplasm. It carries out the reaction 1-(5-phospho-beta-D-ribosyl)-5'-AMP + H2O = 1-(5-phospho-beta-D-ribosyl)-5-[(5-phospho-beta-D-ribosylamino)methylideneamino]imidazole-4-carboxamide. The protein operates within amino-acid biosynthesis; L-histidine biosynthesis; L-histidine from 5-phospho-alpha-D-ribose 1-diphosphate: step 3/9. In terms of biological role, catalyzes the hydrolysis of the adenine ring of phosphoribosyl-AMP. The sequence is that of Phosphoribosyl-AMP cyclohydrolase from Stutzerimonas stutzeri (strain A1501) (Pseudomonas stutzeri).